A 268-amino-acid polypeptide reads, in one-letter code: uncharacterized protein (268 aa).

A run of 4 helical transmembrane segments spans residues 32-52 (SLLL…IFFI), 70-90 (VFVG…AFLF), 125-145 (GVSS…FYIF), and 237-257 (IKYI…AYLT).

This sequence belongs to the CbiQ family.

The protein localises to the cell membrane. This is an uncharacterized protein from Methanocaldococcus jannaschii (strain ATCC 43067 / DSM 2661 / JAL-1 / JCM 10045 / NBRC 100440) (Methanococcus jannaschii).